The following is a 218-amino-acid chain: GEM-like protein 6 (218 aa).

The GRAM domain occupies 96–174 (KIYKRLFKVC…CKINGVNQSQ (79 aa)).

This sequence belongs to the GEM family.

This Arabidopsis thaliana (Mouse-ear cress) protein is GEM-like protein 6.